Consider the following 459-residue polypeptide: Heat stress transcription factor A-4d (459 aa).

Residues 127–189 (AESERRELEE…QKNIVASLCE (63 aa)) adopt a coiled-coil conformation. The hydrophobic repeat HR-A/B stretch occupies residues 141-191 (LKYEKSILVADLQRQNQQQYVINWQMQAMEGRLVAMEQRQKNIVASLCEML). A Nuclear localization signal motif is present at residues 209–213 (SKKRR). Residues 364–388 (YPTQADVNSEIASSTDTSQDGTSET) are compositionally biased toward polar residues. The tract at residues 364–398 (YPTQADVNSEIASSTDTSQDGTSETEASHGPTNDV) is disordered. Residues 397–406 (DVFWERFLTE) carry the AHA motif.

It belongs to the HSF family. Class A subfamily. As to quaternary structure, homotrimer. Post-translationally, exhibits temperature-dependent phosphorylation.

The protein localises to the nucleus. Its function is as follows. Transcriptional regulator that specifically binds DNA of heat shock promoter elements (HSE). In Oryza sativa subsp. japonica (Rice), this protein is Heat stress transcription factor A-4d (HSFA4D).